The sequence spans 3411 residues: MSGRKAQGKTLGVNMVRRGVRSLSNKIKQKTKQIGNRPGPSRGVQGFIFFFLFNILTGKKITAHLKRLWKMLDPRQGLAVLRKVKRVVASLMRGLSSRKRRSHDVLTVQFLILGMLLMTGGVTLVRKNRWLLLNVTSEDLGKTFSVGTGNCTTNILEAKYWCPDSMEYNCPNLSPREEPDDIDCWCYGVENVRVAYGKCDSAGRSRRSRRAIDLPTHENHGLKTRQEKWMTGRMGERQLQKIERWLVRNPFFAVTALTIAYLVGSNMTQRVVIALLVLAVGPAYSAHCIGITDRDFIEGVHGGTWVSATLEQDKCVTVMAPDKPSLDISLETVAIDGPAEARKVCYNAVLTHVKINDKCPSTGEAHLAEENEGDNACKRTYSDRGWGNGCGLFGKGSIVACAKFTCAKSMSLFEVDQTKIQYVIRAQLHVGAKQENWNTDIKTLKFDALSGSQEAEFTGYGKATLECQVQTAVDFGNSYIAEMEKESWIVDRQWAQDLTLPWQSGSGGVWREMHHLVEFEPPHAATIRVLALGNQEGSLKTALTGAMRVTKDTNDNNLYKLHGGHVSCRVKLSALTLKGTSYKMCTDKMSFVKNPTDTGHGTVVMQVKVPKGAPCKIPVIVADDLTAAINKGILVTVNPIASTNDDEVLIEVNPPFGDSYIIVGTGDSRLTYQWHKEGSSIGKLFTQTMKGAERLAVMGDAAWDFSSAGGFFTSVGKGIHTVFGSAFQGLFGGLNWITKVIMGAVLIWVGINTRNMTMSMSMILVGVIMMFLSLGVGADQGCAINFGKRELKCGDGIFIFRDSDDWLNKYSYYPEDPVKLASIVKASFEEGKCGLNSVDSLEHEMWRSRADEINAILEENEVDISVVVQDPKNVYQRGTHPFSRIRDGLQYGWKTWGKNLVFSPGRKNGSFIIDGKSRKECPFSNRVWNSFQIEEFGTGVFTTRVYMDAVFEYTIDCDGSILGAAVNGKKSAHGSPTFWMGSHEVNGTWMIHTLEALDYKECEWPLTHTIGTSVEESEMFMPRSIGGPVSSHNHIPGYKVQTNGPWMQVPLEVKREACPGTSVIIDGNCDGRGKSTRSTTDSGKIIPEWCCRSCTMPPVSFHGSDGCWYPMEIRPRKTHESHLVRSWVTAGEIHAVPFGLVSMMIAMEVVLRKRQGPKQMLVGGVVLLGAMLVGQVTLLDLLKLTVAVGLHFHEMNNGGDAMYMALIAAFSIRPGLLIGFGLRTLWSPRERLVLTLGAAMVEIALGGMMGGLWKYLNAVSLCILTINAVASRKASNTILPLMALLTPVTMAEVRLATMLFCTVVIIGVLHQNSKDTSMQKTIPLVALTLTSYLGLTQPFLGLCAFLATRIFGRRSIPVNEALAAAGLVGVLAGLAFQEMENFLGPIAVGGILMMLVSVAGRVDGLELKKLGEVSWEEEAEISGSSARYDVALSEQGEFKLLSEEKVPWDQVVMTSLALVGAAIHPFALLLVLAGWLFHVRGARRSGDVLWDIPTPKIIEECEHLEDGIYGIFQSTFLGASQRGVGVAQGGVFHTMWHVTRGAFLVRNGKKLIPSWASVKEDLVAYGGSWKLEGRWDGEEEVQLIAAVPGKNVVNVQTKPSLFKVRNGGEIGAVALDYPSGTSGSPIVNRNGEVIGLYGNGILVGDNSFVSAISQTEVKEEGKEELQEIPTMLKKGMTTILDFHPGAGKTRRFLPQILAECARRRLRTLVLAPTRVVLSEMKEAFHGLDVKFHTQAFSAHGSGREVIDAMCHATLTYRMLEPTRVVNWEVIIMDEAHFLDPASIAARGWAAHRARANESATILMTATPPGTSDEFPHSNGEIEDVQTDIPSEPWNTGHDWILADKRPTAWFLPSIRAANVMAASLRKAGKSVVVLNRKTFEREYPTIKQKKPDFILATDIAEMGANLCVERVLDCRTAFKPVLVDEGRKVAIKGPLRISASSAAQRRGRIGRNPNRDGDSYYYSEPTSEDNAHHVCWLEASMLLDNMEVRGGMVAPLYGVEGTKTPVSPGEMRLRDDQRKVFRELVRNCDLPVWLSWQVAKAGLKTNDRKWCFEGPEEHEILNDSGETVKCRAPGGAKKPLRPRWCDERVSSDQSALSEFIKFAEGRRGAAEVLVVLSELPDFLAKKGGEAMDTISVFLHSEEGSRAYRNALSMMPEAMTIVMLFILAGLLTSGMVIFFMSPKGISRMSMAMGTMAGCGYLMFLGGVKPTHISYIMLIFFVLMVVVIPEPGQQRSIQDNQVAYLIIGILTLVSVVAANELGMLEKTKEDLFGKKNLIPSSASPWSWPDLDLKPGAAWTVYVGIVTMLSPMLHHWIKVEYGNLSLSGIAQSASVLSFMDKGIPFMKMNISVIILLVSGWNSITVMPLLCGIGCAMLHWSLILPGIKAQQSKLAQRRVFHGVAKNPVVDGNPTVDIEEAPEMPALYEKKLALYLLLALSLASVAMCRTPFSLAEGIVLASAALGPLIEGNTSLLWNGPMAVSMTGVMRGNYYAFVGVMYNLWKMKTGRRGSANGKTLGEVWKRELNLLDKQQFELYKRTDIVEVDRDTARRHLAEGKVDTGVAVSRGTAKLRWFHERGYVKLEGRVIDLGCGRGGWCYYAAAQKEVSGVKGFTLGRDGHEKPMNVQSLGWNIITFKDKTDIHRLEPVKCDTLLCDIGESSSSSVTEGERTVRVLDTVEKWLACGVDNFCVKVLAPYMPDVLEKLELLQRRFGGTVIRNPLSRNSTHEMYYVSGARSNVTFTVNQTSRLLMRRMRRPTGKVTLEADVILPIGTRSVETDKGPLDKEAIEERVERIKSEYMTSWFYDNDNPYRTWHYCGSYVTKTSGSAASMVNGVIKILTYPWDRIEEVTRMAMTDTTPFGQQRVFKEKVDTRAKDPPAGTRKIMKVVNRWLFRHLAREKNPRLCTKEEFIAKVRSHAAIGAYLEEQEQWKTANEAVQDPKFWELVDEERKLHQQGRCRTCVYNMMGKREKKLSEFGKAKGSRAIWYMWLGARYLEFEALGFLNEDHWASRENSGGGVEGIGLQYLGYVIRDLAAMDGGGFYADDTAGWDTRITEADLDDEQEILNYMSPHHKKLAQAVMEMTYKNKVVKVLRPAPGGKAYMDVISRRDQRGSGQVVTYALNTITNLKVQLIRMAEAEMVIHHQHVQDCDESVLTRLEAWLTEHGCNRLKRMAVSGDDCVVRPIDDRFGLALSHLNAMSKVRKDISEWQPSKGWNDWENVPFCSHHFHELQLKDGRRIVVPCREQDELIGRGRVSPGNGWMIKETACLSKAYANMWSLMYFHKRDMRLLSLAVSSAVPTSWVPQGRTTWSIHGKGEWMTTEDMLEVWNRVWITNNPHMQDKTMVKEWRDVPYLTKRQDKLCGSLIGMTNRATWASHIHLVIHRIRTLIGQEKYTDYLTVMDRYSVDADLQPGELI.

The Cytoplasmic portion of the chain corresponds to 1 to 104 (MSGRKAQGKT…LSSRKRRSHD (104 aa)). A hydrophobic; homodimerization of capsid protein C region spans residues 38–72 (PGPSRGVQGFIFFFLFNILTGKKITAHLKRLWKML). Positions 102 to 121 (SHDVLTVQFLILGMLLMTGG) are cleaved as a propeptide — ER anchor for the capsid protein C, removed in mature form by serine protease NS3. Residues 105 to 125 (VLTVQFLILGMLLMTGGVTLV) form a helical membrane-spanning segment. Residues 126 to 244 (RKNRWLLLNV…GERQLQKIER (119 aa)) lie on the Extracellular side of the membrane. Residues Asn-134 and Asn-150 are each glycosylated (N-linked (GlcNAc...) asparagine; by host). Residues 245 to 265 (WLVRNPFFAVTALTIAYLVGS) form a helical membrane-spanning segment. At 266-270 (NMTQR) the chain is on the cytoplasmic side. The helical transmembrane segment at 271-285 (VVIALLVLAVGPAYS) threads the bilayer. Residues 286–730 (AHCIGITDRD…TVFGSAFQGL (445 aa)) are Extracellular-facing. Cystine bridges form between Cys-288–Cys-315, Cys-345–Cys-401, Cys-345–Cys-406, Cys-359–Cys-390, Cys-377–Cys-401, Cys-377–Cys-406, Cys-467–Cys-568, and Cys-585–Cys-615. Residues 383 to 396 (DRGWGNGCGLFGKG) are fusion peptide. Residues 731–751 (FGGLNWITKVIMGAVLIWVGI) form a helical membrane-spanning segment. At 752-757 (NTRNMT) the chain is on the extracellular side. A helical membrane pass occupies residues 758–778 (MSMSMILVGVIMMFLSLGVGA). Topologically, residues 779-1132 (DQGCAINFGK…LVRSWVTAGE (354 aa)) are extracellular. 6 disulfide bridges follow: Cys-782–Cys-793, Cys-833–Cys-921, Cys-957–Cys-1002, Cys-1058–Cys-1107, Cys-1069–Cys-1091, and Cys-1090–Cys-1094. 2 N-linked (GlcNAc...) asparagine; by host glycosylation sites follow: Asn-908 and Asn-986. The chain crosses the membrane as a helical span at residues 1133 to 1153 (IHAVPFGLVSMMIAMEVVLRK). At 1154–1201 (RQGPKQMLVGGVVLLGAMLVGQVTLLDLLKLTVAVGLHFHEMNNGGDA) the chain is on the cytoplasmic side. Residues 1202–1222 (MYMALIAAFSIRPGLLIGFGL) traverse the membrane as a helical segment. The Lumenal segment spans residues 1223–1287 (RTLWSPRERL…ILPLMALLTP (65 aa)). The helical transmembrane segment at 1288-1308 (VTMAEVRLATMLFCTVVIIGV) threads the bilayer. Over 1309–1355 (LHQNSKDTSMQKTIPLVALTLTSYLGLTQPFLGLCAFLATRIFGRRS) the chain is Cytoplasmic. The chain crosses the membrane as a helical span at residues 1356 to 1376 (IPVNEALAAAGLVGVLAGLAF). The Lumenal segment spans residues 1377-1378 (QE). The helical transmembrane segment at 1379-1399 (MENFLGPIAVGGILMMLVSVA) threads the bilayer. At 1400–1456 (GRVDGLELKKLGEVSWEEEAEISGSSARYDVALSEQGEFKLLSEEKVPWDQVVMTSL) the chain is on the cytoplasmic side. Positions 1407–1446 (LKKLGEVSWEEEAEISGSSARYDVALSEQGEFKLLSEEKV) are interacts with and activates NS3 protease. Residues 1457 to 1477 (ALVGAAIHPFALLLVLAGWLF) constitute an intramembrane region (helical). Residues 1478 to 2157 (HVRGARRSGD…RNALSMMPEA (680 aa)) lie on the Cytoplasmic side of the membrane. The region spanning 1485 to 1665 (SGDVLWDIPT…EVKEEGKEEL (181 aa)) is the Peptidase S7 domain. Residues His-1537, Asp-1561, and Ser-1622 each act as charge relay system; for serine protease NS3 activity in the active site. Residues 1669 to 1825 (PTMLKKGMTT…HSNGEIEDVQ (157 aa)) form the Helicase ATP-binding domain. Positions 1673–1676 (KKGM) are important for RNA-binding. 1682–1689 (FHPGAGKT) contributes to the ATP binding site. The short motif at 1773–1776 (DEAH) is the DEAH box element. Positions 1820–1997 (EIEDVQTDIP…VRGGMVAPLY (178 aa)) constitute a Helicase C-terminal domain. Lys-1877 carries the post-translational modification N6-acetyllysine; by host. Residues 1942-1961 (AAQRRGRIGRNPNRDGDSYY) are disordered. The chain crosses the membrane as a helical span at residues 2158-2178 (MTIVMLFILAGLLTSGMVIFF). Residues 2179-2186 (MSPKGISR) are Lumenal-facing. The helical intramembrane region spans 2187–2207 (MSMAMGTMAGCGYLMFLGGVK). Residues 2208–2209 (PT) lie on the Lumenal side of the membrane. Residues 2210-2230 (HISYIMLIFFVLMVVVIPEPG) form a helical membrane-spanning segment. The Cytoplasmic portion of the chain corresponds to 2231-2241 (QQRSIQDNQVA). A helical transmembrane segment spans residues 2242–2262 (YLIIGILTLVSVVAANELGML). At 2263–2293 (EKTKEDLFGKKNLIPSSASPWSWPDLDLKPG) the chain is on the lumenal side. An intramembrane region (helical) is located at residues 2294–2314 (AAWTVYVGIVTMLSPMLHHWI). The Lumenal portion of the chain corresponds to 2315-2360 (KVEYGNLSLSGIAQSASVLSFMDKGIPFMKMNISVIILLVSGWNSI). The chain crosses the membrane as a helical span at residues 2361–2380 (TVMPLLCGIGCAMLHWSLIL). Residues 2381 to 2421 (PGIKAQQSKLAQRRVFHGVAKNPVVDGNPTVDIEEAPEMPA) lie on the Cytoplasmic side of the membrane. A helical membrane pass occupies residues 2422-2442 (LYEKKLALYLLLALSLASVAM). At 2443 to 2445 (CRT) the chain is on the lumenal side. The chain crosses the membrane as a helical span at residues 2446-2466 (PFSLAEGIVLASAALGPLIEG). Residues 2467–3411 (NTSLLWNGPM…DADLQPGELI (945 aa)) lie on the Cytoplasmic side of the membrane. Positions 2507–2771 (GSANGKTLGE…DVILPIGTRS (265 aa)) constitute an mRNA cap 0-1 NS5-type MT domain. Residue Ser-2562 coordinates S-adenosyl-L-methionine. Ser-2562 carries the post-translational modification Phosphoserine. Lys-2567 acts as the For 2'-O-MTase activity in catalysis. S-adenosyl-L-methionine-binding residues include Gly-2592, Trp-2593, Thr-2610, Leu-2611, Asp-2637, and Ile-2638. The For 2'-O-MTase activity role is filled by Asp-2652. Ile-2653 contributes to the S-adenosyl-L-methionine binding site. Catalysis depends on for 2'-O-MTase activity residues Lys-2688 and Glu-2724. Residue Tyr-2726 coordinates S-adenosyl-L-methionine. Positions 2878–2911 (RKIMKVVNRWLFRHLAREKNPRLCTKEEFIAKVR) match the Nuclear localization signal motif. Zn(2+)-binding residues include Glu-2945, His-2949, Cys-2954, and Cys-2957. The region spanning 3035-3187 (GGFYADDTAG…RPIDDRFGLA (153 aa)) is the RdRp catalytic domain. Zn(2+)-binding residues include His-3222, Cys-3238, and Cys-3357.

It in the N-terminal section; belongs to the class I-like SAM-binding methyltransferase superfamily. mRNA cap 0-1 NS5-type methyltransferase family. In terms of assembly, homodimer. Interacts (via N-terminus) with host EXOC1 (via C-terminus); this interaction results in EXOC1 degradation through the proteasome degradation pathway. As to quaternary structure, forms heterodimers with envelope protein E in the endoplasmic reticulum and Golgi. Homodimer; in the endoplasmic reticulum and Golgi. Interacts with protein prM. Interacts with non-structural protein 1. In terms of assembly, homodimer; Homohexamer when secreted. Interacts with envelope protein E. NS1 interacts with NS4B. Interacts with host complement protein CFH; this interaction leads to the degradation of C3. As to quaternary structure, interacts (via N-terminus) with serine protease NS3. Forms a heterodimer with serine protease NS3. May form homooligomers. In terms of assembly, forms a heterodimer with NS2B. Interacts with non-structural protein 2A (via N-terminus). Interacts with NS4B. Interacts with unphosphorylated RNA-directed RNA polymerase NS5; this interaction stimulates RNA-directed RNA polymerase NS5 guanylyltransferase activity. NS3 interacts with host PDCD6IP; this interaction contributes to virion release. As to quaternary structure, interacts with serine protease NS3. Homodimer. Interacts with host STAT2; this interaction prevents the establishment of cellular antiviral state. Interacts with serine protease NS3. Interacts with host TRIM23; this interaction leads to NS5 ubiquitination. In terms of processing, specific enzymatic cleavages in vivo yield mature proteins. The nascent capsid protein C contains a C-terminal hydrophobic domain that act as a signal sequence for translocation of prM into the lumen of the ER. Mature capsid protein C is cleaved at a site upstream of this hydrophobic domain by NS3. prM is cleaved in post-Golgi vesicles by a host furin, releasing the mature small envelope protein M, and peptide pr. Non-structural protein 2A-alpha, a C-terminally truncated form of non-structural protein 2A, results from partial cleavage by NS3. Specific enzymatic cleavages in vivo yield mature proteins peptide 2K acts as a signal sequence and is removed from the N-terminus of NS4B by the host signal peptidase in the ER lumen. Signal cleavage at the 2K-4B site requires a prior NS3 protease-mediated cleavage at the 4A-2K site. Post-translationally, cleaved in post-Golgi vesicles by a host furin, releasing the mature small envelope protein M, and peptide pr. This cleavage is incomplete as up to 30% of viral particles still carry uncleaved prM. N-glycosylated. In terms of processing, N-glycosylated. The excreted form is glycosylated and this is required for efficient secretion of the protein from infected cells. Post-translationally, polyubiquitinated; ubiquitination is probably mediated by host TRIM23 and is prerequisite for NS5-STAT2 interaction. NS5 is not ISGylated or sumoylated. Acetylated by host KAT5. Acetylation modulates NS3 RNA-binding and unwinding activities and plays an important positive role for viral replication. In terms of processing, phosphorylated on serines residues. This phosphorylation may trigger NS5 nuclear localization.

The protein resides in the virion. It localises to the host nucleus. It is found in the host cytoplasm. The protein localises to the host perinuclear region. Its subcellular location is the secreted. The protein resides in the virion membrane. It localises to the host endoplasmic reticulum membrane. The catalysed reaction is Selective hydrolysis of -Xaa-Xaa-|-Yaa- bonds in which each of the Xaa can be either Arg or Lys and Yaa can be either Ser or Ala.. The enzyme catalyses RNA(n) + a ribonucleoside 5'-triphosphate = RNA(n+1) + diphosphate. It catalyses the reaction a ribonucleoside 5'-triphosphate + H2O = a ribonucleoside 5'-diphosphate + phosphate + H(+). It carries out the reaction ATP + H2O = ADP + phosphate + H(+). The catalysed reaction is a 5'-end (5'-triphosphoguanosine)-ribonucleoside in mRNA + S-adenosyl-L-methionine = a 5'-end (N(7)-methyl 5'-triphosphoguanosine)-ribonucleoside in mRNA + S-adenosyl-L-homocysteine. The enzyme catalyses a 5'-end (N(7)-methyl 5'-triphosphoguanosine)-ribonucleoside in mRNA + S-adenosyl-L-methionine = a 5'-end (N(7)-methyl 5'-triphosphoguanosine)-(2'-O-methyl-ribonucleoside) in mRNA + S-adenosyl-L-homocysteine + H(+). Its function is as follows. Plays a role in virus budding by binding to the cell membrane and gathering the viral RNA into a nucleocapsid that forms the core of a mature virus particle. During virus entry, may induce genome penetration into the host cytoplasm after hemifusion induced by the surface proteins. Can migrate to the cell nucleus where it modulates host functions. Functionally, inhibits RNA silencing by interfering with host Dicer. In terms of biological role, prevents premature fusion activity of envelope proteins in trans-Golgi by binding to envelope protein E at pH6.0. After virion release in extracellular space, gets dissociated from E dimers. Acts as a chaperone for envelope protein E during intracellular virion assembly by masking and inactivating envelope protein E fusion peptide. prM is the only viral peptide matured by host furin in the trans-Golgi network probably to avoid catastrophic activation of the viral fusion activity in acidic Golgi compartment prior to virion release. prM-E cleavage is inefficient, and many virions are only partially matured. These uncleaved prM would play a role in immune evasion. Its function is as follows. May play a role in virus budding. Exerts cytotoxic effects by activating a mitochondrial apoptotic pathway through M ectodomain. May display a viroporin activity. Functionally, binds to host cell surface receptor and mediates fusion between viral and cellular membranes. Envelope protein is synthesized in the endoplasmic reticulum in the form of heterodimer with protein prM. They play a role in virion budding in the ER, and the newly formed immature particle is covered with 60 spikes composed of heterodimer between precursor prM and envelope protein E. The virion is transported to the Golgi apparatus where the low pH causes dissociation of PrM-E heterodimers and formation of E homodimers. prM-E cleavage is inefficient, and many virions are only partially matured. These uncleaved prM would play a role in immune evasion. In terms of biological role, involved in immune evasion, pathogenesis and viral replication. Once cleaved off the polyprotein, is targeted to three destinations: the viral replication cycle, the plasma membrane and the extracellular compartment. Essential for viral replication. Required for formation of the replication complex and recruitment of other non-structural proteins to the ER-derived membrane structures. Excreted as a hexameric lipoparticle that plays a role against host immune response. Antagonizing the complement function. Binds to the host macrophages and dendritic cells. Inhibits signal transduction originating from Toll-like receptor 3 (TLR3). Component of the viral RNA replication complex that functions in virion assembly and antagonizes the host immune response. Its function is as follows. Required cofactor for the serine protease function of NS3. May have membrane-destabilizing activity and form viroporins. Functionally, displays three enzymatic activities: serine protease, NTPase and RNA helicase. NS3 serine protease, in association with NS2B, performs its autocleavage and cleaves the polyprotein at dibasic sites in the cytoplasm: C-prM, NS2A-NS2B, NS2B-NS3, NS3-NS4A, NS4A-2K and NS4B-NS5. NS3 RNA helicase binds RNA and unwinds dsRNA in the 3' to 5' direction. Also plays a role in virus assembly. In terms of biological role, regulates the ATPase activity of the NS3 helicase activity. NS4A allows NS3 helicase to conserve energy during unwinding. Functions as a signal peptide for NS4B and is required for the interferon antagonism activity of the latter. Its function is as follows. Induces the formation of ER-derived membrane vesicles where the viral replication takes place. Inhibits interferon (IFN)-induced host STAT1 phosphorylation and nuclear translocation, thereby preventing the establishment of cellular antiviral state by blocking the IFN-alpha/beta pathway. Functionally, replicates the viral (+) and (-) RNA genome, and performs the capping of genomes in the cytoplasm. NS5 methylates viral RNA cap at guanine N-7 and ribose 2'-O positions. Besides its role in RNA genome replication, also prevents the establishment of cellular antiviral state by blocking the interferon-alpha/beta (IFN-alpha/beta) signaling pathway. IFN-I induces binding of NS5 to host IFN-activated transcription factor STAT2, preventing its transcriptional activity. Host TRIM23 is the E3 ligase that interacts with and polyubiquitinates NS5 to promote its binding to STAT2 and trigger IFN-I signaling inhibition. The protein is Genome polyprotein of Yellow fever virus (strain Ghana/Asibi/1927) (YFV).